The chain runs to 654 residues: Fimbrin-2 (654 aa).

Calponin-homology (CH) domains follow at residues 124–241 (DSEK…KIQL), 269–372 (LPPE…QHRN), 394–500 (SREE…RYNI), and 515–623 (EITD…YWTL). Actin-binding regions lie at residues 124–372 (DSEK…QHRN) and 394–623 (SREE…YWTL).

Interacts with F-actin.

Its subcellular location is the cytoplasm. It localises to the cytoskeleton. Cross-links actin filaments (F-actin). Stabilizes and prevents F-actin depolymerization mediated by profilin. May regulate actin cytoarchitecture, cell cycle, cell division, cell elongation and cytoplasmic tractus. In Arabidopsis thaliana (Mouse-ear cress), this protein is Fimbrin-2.